The primary structure comprises 612 residues: Dihydroxy-acid dehydratase (612 aa).

Asp81 is a binding site for Mg(2+). Cys122 contributes to the [2Fe-2S] cluster binding site. 2 residues coordinate Mg(2+): Asp123 and Lys124. N6-carboxylysine is present on Lys124. Cys193 serves as a coordination point for [2Fe-2S] cluster. Glu489 is a Mg(2+) binding site. The Proton acceptor role is filled by Ser515.

It belongs to the IlvD/Edd family. Homodimer. It depends on [2Fe-2S] cluster as a cofactor. Requires Mg(2+) as cofactor.

The enzyme catalyses (2R)-2,3-dihydroxy-3-methylbutanoate = 3-methyl-2-oxobutanoate + H2O. It carries out the reaction (2R,3R)-2,3-dihydroxy-3-methylpentanoate = (S)-3-methyl-2-oxopentanoate + H2O. The protein operates within amino-acid biosynthesis; L-isoleucine biosynthesis; L-isoleucine from 2-oxobutanoate: step 3/4. Its pathway is amino-acid biosynthesis; L-valine biosynthesis; L-valine from pyruvate: step 3/4. Its function is as follows. Functions in the biosynthesis of branched-chain amino acids. Catalyzes the dehydration of (2R,3R)-2,3-dihydroxy-3-methylpentanoate (2,3-dihydroxy-3-methylvalerate) into 2-oxo-3-methylpentanoate (2-oxo-3-methylvalerate) and of (2R)-2,3-dihydroxy-3-methylbutanoate (2,3-dihydroxyisovalerate) into 2-oxo-3-methylbutanoate (2-oxoisovalerate), the penultimate precursor to L-isoleucine and L-valine, respectively. The polypeptide is Dihydroxy-acid dehydratase (Azotobacter vinelandii (strain DJ / ATCC BAA-1303)).